The chain runs to 311 residues: Eukaryotic translation initiation factor 3 subunit E (311 aa).

The 181-residue stretch at 100–280 (VYYNYPKGRD…MGVKSVSIHE (181 aa)) folds into the PCI domain.

It belongs to the eIF-3 subunit E family. In terms of assembly, component of the eukaryotic translation initiation factor 3 (eIF-3) complex.

The protein localises to the cytoplasm. Component of the eukaryotic translation initiation factor 3 (eIF-3) complex, which is involved in protein synthesis of a specialized repertoire of mRNAs and, together with other initiation factors, stimulates binding of mRNA and methionyl-tRNAi to the 40S ribosome. The eIF-3 complex specifically targets and initiates translation of a subset of mRNAs involved in cell proliferation. This Caenorhabditis briggsae protein is Eukaryotic translation initiation factor 3 subunit E.